An 869-amino-acid chain; its full sequence is Speckle targeted PIP5K1A-regulated poly(A) polymerase (869 aa).

The Matrin-type zinc-finger motif lies at 16-46; it reads FRCCLCHVTTANRPSLDAHLGGRKHRHLVEL. The RRM domain maps to 56–128; the sequence is RSVFVSGFPR…HRLRVRPREQ (73 aa). Residues 111–147 form a disordered region; the sequence is QPQHTLGGHRLRVRPREQKEFQSPASKSPKGAAPDSH. Residue S205 participates in ATP binding. Residues D216 and D218 each coordinate Mg(2+). UTP is bound by residues D216 and D218. Residues 252–315 are disordered; the sequence is QALACTPASP…PASPLQEDRG (64 aa). Over residues 259–269 the composition is skewed to pro residues; that stretch reads ASPPDSQPPSP. Positions 279 to 290 are enriched in polar residues; sequence TPSSSLAPQTPD. N391 contributes to the ATP binding site. UTP is bound by residues N391, R413, Y431, and H548. The PAP-associated domain maps to 490 to 548; sequence LSSLLAQFFSCVSCWDLRGSLLSLREGQALPVAGDLPSNRWEGLRLGPMNLQDPFDLSH. The tract at residues 597 to 869 is KA1; binds the bulging loops of U6 snRNA but is dispensable for terminal uridylyltransferase activity; the sequence is SSPSSLLSAT…VFLPQALRNL (273 aa). Basic and acidic residues-rich tracts occupy residues 637–648 and 660–686; these read GTKRLRSDRGGP and LKLD…HSED. Disordered stretches follow at residues 637–686 and 720–755; these read GTKR…HSED and LATG…TGRG. 2 positions are modified to phosphoserine: S684 and S748.

This sequence belongs to the DNA polymerase type-B-like family. As to quaternary structure, associates with the cleavage and polyadenylation specificity factor (CPSF) complex. Interacts with CPSF1 and CPSF3; the interaction is direct. Interacts with PIP5K1A. Mg(2+) serves as cofactor. Mn(2+) is required as a cofactor. In terms of processing, phosphorylated by CK1 in the proline-rich (Pro-rich) region.

Its subcellular location is the nucleus. It localises to the nucleolus. It is found in the nucleus speckle. It catalyses the reaction RNA(n) + UTP = RNA(n)-3'-uridine ribonucleotide + diphosphate. The enzyme catalyses RNA(n) + ATP = RNA(n)-3'-adenine ribonucleotide + diphosphate. With respect to regulation, adenylyltransferase activity is specifically phosphatidylinositol 4,5-bisphosphate (PtdIns(4,5)P2). Poly(A) polymerase that creates the 3'-poly(A) tail of specific pre-mRNAs. Localizes to nuclear speckles together with PIP5K1A and mediates polyadenylation of a select set of mRNAs, such as HMOX1. In addition to polyadenylation, it is also required for the 3'-end cleavage of pre-mRNAs: binds to the 3'UTR of targeted pre-mRNAs and promotes the recruitment and assembly of the CPSF complex on the 3'UTR of pre-mRNAs. In addition to adenylyltransferase activity, also has uridylyltransferase activity. However, the ATP ratio is higher than UTP in cells, suggesting that it functions primarily as a poly(A) polymerase. Acts as a specific terminal uridylyltransferase for U6 snRNA in vitro: responsible for a controlled elongation reaction that results in the restoration of the four 3'-terminal UMP-residues found in newly transcribed U6 snRNA. Not involved in replication-dependent histone mRNA degradation. The protein is Speckle targeted PIP5K1A-regulated poly(A) polymerase (TUT1) of Ailuropoda melanoleuca (Giant panda).